The following is a 442-amino-acid chain: 3-isopropylmalate dehydratase large subunit (442 aa).

3 residues coordinate [4Fe-4S] cluster: Cys347, Cys407, and Cys410.

The protein belongs to the aconitase/IPM isomerase family. LeuC type 1 subfamily. As to quaternary structure, heterodimer of LeuC and LeuD. [4Fe-4S] cluster is required as a cofactor.

The enzyme catalyses (2R,3S)-3-isopropylmalate = (2S)-2-isopropylmalate. Its pathway is amino-acid biosynthesis; L-leucine biosynthesis; L-leucine from 3-methyl-2-oxobutanoate: step 2/4. Functionally, catalyzes the isomerization between 2-isopropylmalate and 3-isopropylmalate, via the formation of 2-isopropylmaleate. The protein is 3-isopropylmalate dehydratase large subunit of Buchnera aphidicola subsp. Uroleucon helianthicola.